The sequence spans 373 residues: 4-hydroxy-3-methylbut-2-en-1-yl diphosphate synthase (flavodoxin) (373 aa).

Residues cysteine 270, cysteine 273, cysteine 305, and glutamate 312 each coordinate [4Fe-4S] cluster.

Belongs to the IspG family. It depends on [4Fe-4S] cluster as a cofactor.

It catalyses the reaction (2E)-4-hydroxy-3-methylbut-2-enyl diphosphate + oxidized [flavodoxin] + H2O + 2 H(+) = 2-C-methyl-D-erythritol 2,4-cyclic diphosphate + reduced [flavodoxin]. It functions in the pathway isoprenoid biosynthesis; isopentenyl diphosphate biosynthesis via DXP pathway; isopentenyl diphosphate from 1-deoxy-D-xylulose 5-phosphate: step 5/6. In terms of biological role, converts 2C-methyl-D-erythritol 2,4-cyclodiphosphate (ME-2,4cPP) into 1-hydroxy-2-methyl-2-(E)-butenyl 4-diphosphate. This chain is 4-hydroxy-3-methylbut-2-en-1-yl diphosphate synthase (flavodoxin), found in Pectobacterium carotovorum subsp. carotovorum (strain PC1).